We begin with the raw amino-acid sequence, 108 residues long: MSDSNSRLVYSTQTGRIEEPKTAPVRPKGDGIVRIQRQTSGRKGKGVCLITGIEMNDAELTKLAAELKKKCGCGGAVKEGIIEIQGDKRDLIKSLLEAKGMKVKLAGG.

The segment covering 1–15 (MSDSNSRLVYSTQTG) has biased composition (polar residues). A disordered region spans residues 1-29 (MSDSNSRLVYSTQTGRIEEPKTAPVRPKG). Residues 16–29 (RIEEPKTAPVRPKG) are compositionally biased toward basic and acidic residues.

The protein belongs to the SUI1 family.

This is an uncharacterized protein from Salmonella typhi.